Here is a 517-residue protein sequence, read N- to C-terminus: Ribonuclease Y (517 aa).

A helical membrane pass occupies residues 1–21 (MIESLIALIAAIVGLGIGYLV). The KH domain maps to 207-273 (LINVINIKND…TKVIELLVED (67 aa)). Residues 333-426 (ALAHSLEVAH…VCAADTLSAA (94 aa)) form the HD domain.

It belongs to the RNase Y family.

It is found in the cell membrane. Endoribonuclease that initiates mRNA decay. The protein is Ribonuclease Y of Campylobacter jejuni subsp. jejuni serotype O:2 (strain ATCC 700819 / NCTC 11168).